Here is a 395-residue protein sequence, read N- to C-terminus: MQLEPAHLVYAAFWTFGLVNNVLYVVILTAAVDLVGPQTPKAVVLLADVLPSFLIKLAAPFFIHKIPYNRRITLLVGLSTVGMMSVSLASPLFLKLVGVVLASFSSGLGEVTFLQLTHFYDTRALNGWSSGTGGAGLVGSGLFMLLTTVLGVSVKTSLLVFAFFPLAFLGVYFYLLPPRDYNRVPGAFPVHSNDPETGIETQPITWEFVASGYETTMVRLKPLVMPYMLPLFLVYFSEYTINQGVAPTLLFPMEELPFSKFRDVYVTYGTLYQLGVFISRSSAPFVRIRRIMIPSVLQFANLVFCIAQSMSPILPNVWLVFILIFYEGLLGGAAYVNTFLLITEQADLAEREFALGSVGMSDSAGIVLAGLVSLWLEPGLCNYQVNDGRGWCTLE.

The first 31 residues, 1 to 31, serve as a signal peptide directing secretion; the sequence is MQLEPAHLVYAAFWTFGLVNNVLYVVILTAA. A run of 10 helical transmembrane segments spans residues 43–63, 74–94, 96–116, 134–154, 158–178, 222–242, 261–278, 291–311, 313–333, and 355–375; these read VVLL…PFFI, LLVG…PLFL, LVGV…FLQL, GAGL…GVSV, LLVF…LLPP, PLVM…YTIN, FRDV…GVFI, IMIP…QSMS, ILPN…LGGA, and LGSV…VSLW.

It belongs to the battenin family.

The protein localises to the vacuole membrane. Its function is as follows. Involved in vacuolar transport and vacuole pH homeostasis. Also required for cytokinesis. The chain is Protein BTN1 (BTN1) from Yarrowia lipolytica (strain CLIB 122 / E 150) (Yeast).